The sequence spans 2360 residues: DNA (cytosine-5-)-methyltransferase DMT5 (2360 aa).

An SAM-dependent MTase C5-type domain is found at 48–507 (FTVGTMCSGT…LCILIAERQV (460 aa)). Residue C146 is part of the active site. The 318-residue stretch at 1258 to 1575 (AEVVNRARGG…CAIADLVNMH (318 aa)) folds into the Helicase ATP-binding domain. 1271 to 1278 (HDVGFGKT) serves as a coordination point for ATP. The tract at residues 1451-1498 (SRRKDQKSKATARTQRAKKKSKKPRRTAAAAAESDHSAESDSDSAMDD) is disordered. The span at 1465–1476 (QRAKKKSKKPRR) shows a compositional bias: basic residues. An RING-type; degenerate zinc finger spans residues 2018–2070 (CSVCGSQDNTEMKDLSLFITCGHLLCSGCVAAHEHQHGQAESTTGEVLCPVDS). A Helicase C-terminal domain is found at 2102–2267 (KVMKILDVIR…RMPLDDLDYK (166 aa)).

In the N-terminal section; belongs to the class I-like SAM-binding methyltransferase superfamily. C5-methyltransferase family. This sequence in the C-terminal section; belongs to the SNF2/RAD54 helicase family.

The protein localises to the nucleus. Its subcellular location is the chromosome. The catalysed reaction is a 2'-deoxycytidine in DNA + S-adenosyl-L-methionine + ATP + H2O = a 5-methyl-2'-deoxycytidine in DNA + S-adenosyl-L-homocysteine + ADP + phosphate + 2 H(+). Functionally, may play a role in cytosine methylation at palindromic 5'-CG-3' and 5'-C[ACT]G-3' sites in DNA. The polypeptide is DNA (cytosine-5-)-methyltransferase DMT5 (Verticillium dahliae (strain VdLs.17 / ATCC MYA-4575 / FGSC 10137) (Verticillium wilt)).